The primary structure comprises 109 residues: Nucleoid-associated protein Plut_1285 (109 aa).

It belongs to the YbaB/EbfC family. In terms of assembly, homodimer.

It localises to the cytoplasm. The protein resides in the nucleoid. In terms of biological role, binds to DNA and alters its conformation. May be involved in regulation of gene expression, nucleoid organization and DNA protection. This is Nucleoid-associated protein Plut_1285 from Chlorobium luteolum (strain DSM 273 / BCRC 81028 / 2530) (Pelodictyon luteolum).